We begin with the raw amino-acid sequence, 915 residues long: Transferrin-binding protein A (915 aa).

The N-terminal stretch at 1–24 is a signal peptide; sequence MQQQHLFRFNILCLSLMTALPAYA. Residues 25-187 are Periplasmic-facing; the sequence is ENVQAGQAQE…ADDVIGEGRQ (163 aa). A TonB box motif is present at residues 38–45; that stretch reads DTIQVKAK. The region spanning 51–176 is the TBDR plug domain; the sequence is RDNEVTGLGK…LAGSVAFQTK (126 aa). Residues 121 to 139 form a plug loop, interacts with transferrin region; that stretch reads SYTAQAALGGTRTAGSSGA. The TBDR beta-barrel domain occupies 187–915; it reads QWGIQSKTAY…NYTFSLEMKF (729 aa). Residues 188-197 traverse the membrane as a beta stranded segment; sequence WGIQSKTAYS. Residues 198–203 are Extracellular-facing; the sequence is GKNRGL. The beta stranded transmembrane segment at 204–213 threads the bilayer; the sequence is TQSIALAGRI. Residues 214 to 215 lie on the Periplasmic side of the membrane; that stretch reads GG. A beta stranded membrane pass occupies residues 216–225; sequence AEALLIHTGR. The Extracellular segment spans residues 226–309; the sequence is RAGEIRAHED…FLADPLSYES (84 aa). A beta stranded transmembrane segment spans residues 310-319; the sequence is RSWLFRPGFR. Residues 320-324 are Periplasmic-facing; sequence FENKR. A beta stranded membrane pass occupies residues 325–334; it reads HYIGGILEHT. At 335-406 the chain is on the extracellular side; that stretch reads QQTFDTRDMT…VFYDETHTKS (72 aa). The L3 helix finger, interacts with transferrin stretch occupies residues 351–361; sequence KAVFDANKKQA. Residues 407-415 form a beta stranded membrane-spanning segment; that stretch reads RYGLEYVYT. The Periplasmic segment spans residues 416–423; sequence NADKDTWA. The chain crosses the membrane as a beta stranded span at residues 424–433; sequence DYARLSYDRQ. Residues 434 to 478 lie on the Extracellular side of the membrane; the sequence is GIGLDNHFQQTHCSADGSDKYCRPSADKPFSYYKSDRVIYGESHR. The beta stranded transmembrane segment at 479 to 488 threads the bilayer; sequence LLQAAFKKSF. The Periplasmic portion of the chain corresponds to 489-494; that stretch reads DTAKIR. Residues 495–504 traverse the membrane as a beta stranded segment; that stretch reads HNLSVNLGFD. At 505–583 the chain is on the extracellular side; it reads RFGSNLRHQD…PRSINGKSYY (79 aa). The interval 523-542 is disordered; sequence AYSSNTPPQNNGKKISPNGS. A beta stranded transmembrane segment spans residues 584–592; sequence AAVRDNVRL. Residues 593-594 lie on the Periplasmic side of the membrane; sequence GR. A beta stranded transmembrane segment spans residues 595–603; that stretch reads WADVGAGLR. Over 604-623 the chain is Extracellular; sequence YDYRSTHSDDGSVSTGTHRT. Residues 624 to 633 traverse the membrane as a beta stranded segment; that stretch reads LSWNAGIVLK. At 634 to 637 the chain is on the periplasmic side; sequence PTDW. The beta stranded transmembrane segment at 638–647 threads the bilayer; it reads LDLTYRTSTG. The Extracellular segment spans residues 648-675; that stretch reads FRLPSFAEMYGWRAGVQSKAVKIDPEKS. The beta stranded transmembrane segment at 676-685 threads the bilayer; that stretch reads FNKEAGIVFK. Residues 686–689 are Periplasmic-facing; the sequence is GDFG. Residues 690–699 traverse the membrane as a beta stranded segment; it reads NLEASWFNNA. Residues 700–733 are Extracellular-facing; it reads YRDLIVRGYEAQIKDGKEEAKGDPAYLNAQSARI. The beta stranded transmembrane segment at 734-743 threads the bilayer; sequence TGINILGKID. The Periplasmic segment spans residues 744–755; the sequence is WNGVWDKLPEGW. Residues 756–765 traverse the membrane as a beta stranded segment; the sequence is YSTFAYNRVR. Residues 766 to 790 are Extracellular-facing; that stretch reads VRDIKKRADRTDIQSHLFDAIQPSR. A beta stranded transmembrane segment spans residues 791 to 799; that stretch reads YVVGLGYDQ. The Periplasmic portion of the chain corresponds to 800–802; that stretch reads PEG. A beta stranded transmembrane segment spans residues 803–811; the sequence is KWGVNGMLT. Residues 812–845 lie on the Extracellular side of the membrane; that stretch reads YSKAKEITELLGSRALLNGNSRNTKATARRTRPW. Residues 846-855 form a beta stranded membrane-spanning segment; the sequence is YIVDVSGYYT. The Periplasmic portion of the chain corresponds to 856–860; the sequence is VKKHF. Residues 861-870 form a beta stranded membrane-spanning segment; sequence TLRAGVYNLL. Residues 871 to 905 lie on the Extracellular side of the membrane; sequence NYRYVTWENVRQTAGGAVNQHKNVGVYNRYAAPGR. A TonB C-terminal box motif is present at residues 898-915; the sequence is NRYAAPGRNYTFSLEMKF. A beta stranded membrane pass occupies residues 906–915; it reads NYTFSLEMKF.

The protein belongs to the TonB-dependent receptor family. In terms of assembly, binds both human apo- and holo-transferrin (TF), via the TF C-terminus. Forms a large complex with TF and TbpB.

The protein resides in the cell outer membrane. In terms of biological role, neisseria acquires iron by extracting it from serum transferrin (TF) in its human host. Acts as a TF receptor and is required for TF utilization. Binds both apo- and holo-TF, via the TF C-terminus. This Neisseria meningitidis serogroup B (strain ATCC BAA-335 / MC58) protein is Transferrin-binding protein A.